A 283-amino-acid chain; its full sequence is Polyamine aminopropyltransferase (283 aa).

Residues 5-240 enclose the PABS domain; that stretch reads NTWFTEIHQD…GWWTATMACK (236 aa). Gln-33 lines the S-methyl-5'-thioadenosine pocket. Positions 64 and 88 each coordinate spermidine. S-methyl-5'-thioadenosine contacts are provided by residues Asp-108 and 139–140; that span reads DG. The active-site Proton acceptor is Asp-158. 158–161 contributes to the spermidine binding site; that stretch reads DSTD. Pro-165 contacts S-methyl-5'-thioadenosine.

This sequence belongs to the spermidine/spermine synthase family. As to quaternary structure, homodimer or homotetramer.

It localises to the cytoplasm. It catalyses the reaction S-adenosyl 3-(methylsulfanyl)propylamine + putrescine = S-methyl-5'-thioadenosine + spermidine + H(+). The protein operates within amine and polyamine biosynthesis; spermidine biosynthesis; spermidine from putrescine: step 1/1. Functionally, catalyzes the irreversible transfer of a propylamine group from the amino donor S-adenosylmethioninamine (decarboxy-AdoMet) to putrescine (1,4-diaminobutane) to yield spermidine. This chain is Polyamine aminopropyltransferase, found in Thioalkalivibrio sulfidiphilus (strain HL-EbGR7).